Here is a 370-residue protein sequence, read N- to C-terminus: Histidinol-phosphate aminotransferase 1 (370 aa).

Lys-229 bears the N6-(pyridoxal phosphate)lysine mark.

This sequence belongs to the class-II pyridoxal-phosphate-dependent aminotransferase family. Histidinol-phosphate aminotransferase subfamily. As to quaternary structure, homodimer. Requires pyridoxal 5'-phosphate as cofactor.

The catalysed reaction is L-histidinol phosphate + 2-oxoglutarate = 3-(imidazol-4-yl)-2-oxopropyl phosphate + L-glutamate. It participates in amino-acid biosynthesis; L-histidine biosynthesis; L-histidine from 5-phospho-alpha-D-ribose 1-diphosphate: step 7/9. The sequence is that of Histidinol-phosphate aminotransferase 1 from Nitrosococcus oceani (strain ATCC 19707 / BCRC 17464 / JCM 30415 / NCIMB 11848 / C-107).